A 139-amino-acid polypeptide reads, in one-letter code: D-ribose pyranase (139 aa).

The active-site Proton donor is the His-20. Substrate is bound by residues Asp-28, His-106, and 128–130 (YAN).

It belongs to the RbsD / FucU family. RbsD subfamily. Homodecamer.

It localises to the cytoplasm. It carries out the reaction beta-D-ribopyranose = beta-D-ribofuranose. It functions in the pathway carbohydrate metabolism; D-ribose degradation; D-ribose 5-phosphate from beta-D-ribopyranose: step 1/2. In terms of biological role, catalyzes the interconversion of beta-pyran and beta-furan forms of D-ribose. The sequence is that of D-ribose pyranase from Photobacterium profundum (strain SS9).